The sequence spans 154 residues: Myoglobin (154 aa).

The Globin domain maps to 2 to 148 (GLSDGEWQLV…FRNDMAAKYK (147 aa)). Ser-4 is subject to Phosphoserine. Nitrite is bound at residue His-65. Residue His-65 participates in O2 binding. Residue Thr-68 is modified to Phosphothreonine. His-94 contributes to the heme b binding site.

It belongs to the globin family. Monomeric.

The protein localises to the cytoplasm. It is found in the sarcoplasm. The enzyme catalyses Fe(III)-heme b-[protein] + nitric oxide + H2O = Fe(II)-heme b-[protein] + nitrite + 2 H(+). It catalyses the reaction H2O2 + AH2 = A + 2 H2O. In terms of biological role, monomeric heme protein which primary function is to store oxygen and facilitate its diffusion within muscle tissues. Reversibly binds oxygen through a pentacoordinated heme iron and enables its timely and efficient release as needed during periods of heightened demand. Depending on the oxidative conditions of tissues and cells, and in addition to its ability to bind oxygen, it also has a nitrite reductase activity whereby it regulates the production of bioactive nitric oxide. Under stress conditions, like hypoxia and anoxia, it also protects cells against reactive oxygen species thanks to its pseudoperoxidase activity. In Aotus trivirgatus (Three-striped night monkey), this protein is Myoglobin (MB).